Consider the following 446-residue polypeptide: Replication-associated recombination protein A (446 aa).

57 to 64 contributes to the ATP binding site; it reads GPPGTGKT.

This sequence belongs to the AAA ATPase family. RarA/MGS1/WRNIP1 subfamily.

DNA-dependent ATPase that plays important roles in cellular responses to stalled DNA replication processes. The chain is Replication-associated recombination protein A (rarA) from Haemophilus influenzae (strain ATCC 51907 / DSM 11121 / KW20 / Rd).